Consider the following 362-residue polypeptide: Histidinol-phosphate aminotransferase (362 aa).

Lys-220 is modified (N6-(pyridoxal phosphate)lysine).

The protein belongs to the class-II pyridoxal-phosphate-dependent aminotransferase family. Histidinol-phosphate aminotransferase subfamily. In terms of assembly, homodimer. It depends on pyridoxal 5'-phosphate as a cofactor.

The catalysed reaction is L-histidinol phosphate + 2-oxoglutarate = 3-(imidazol-4-yl)-2-oxopropyl phosphate + L-glutamate. The protein operates within amino-acid biosynthesis; L-histidine biosynthesis; L-histidine from 5-phospho-alpha-D-ribose 1-diphosphate: step 7/9. The protein is Histidinol-phosphate aminotransferase of Rhodospirillum centenum (strain ATCC 51521 / SW).